A 428-amino-acid polypeptide reads, in one-letter code: D-serine dehydratase (428 aa).

Residue lysine 57 is modified to N6-(pyridoxal phosphate)lysine. Pyridoxal 5'-phosphate is bound by residues tyrosine 203, tyrosine 210, threonine 255, glycine 286, and asparagine 287. Zn(2+) is bound by residues histidine 398 and cysteine 400.

This sequence belongs to the DSD1 family. Homodimer. Pyridoxal 5'-phosphate serves as cofactor. It depends on Zn(2+) as a cofactor.

The enzyme catalyses D-serine = pyruvate + NH4(+). With respect to regulation, sodium cyanoborohydride, N-ethylmaleimide, hydroxylamine, phenyhydrazin and EDTA are inhibitors of the catalytic activity. Functionally, catalyzes the conversion of D-serine to pyruvate and ammonia. May play a role in D-serine detoxification. The polypeptide is D-serine dehydratase (Saccharomyces cerevisiae (strain ATCC 204508 / S288c) (Baker's yeast)).